Here is a 342-residue protein sequence, read N- to C-terminus: MTNLTLALDAMGGDFGPRITVPASLQALRLNPLLKIVLVGDKTQIDEYIASAEPAIKRRIEIKHTTEVVAMSDRPVHALRNRKQSSMRLAIELVRDGKAQACLSAGNTGALMAMSKVLLKTLPGIDRPALVSCLPAVNNTPVYLLDLGANISCDSETLFQFAVMGSVLCETVDKTVSPKVALLNVGIEEIKGNDQVQQAGQLLQQIPQINYTGFIEGDEIYSGNVDVIVCDGFVGNITLKTSEGIARLLIHQLKKSLSDGFFVKILAKIIAPRIRSLLNQMNPDHYNGASLIGLRGIVVKSHGCADEAAFLQAITLAVTEAQRRLPQMIEDRLESILLDINS.

Belongs to the PlsX family. In terms of assembly, homodimer. Probably interacts with PlsY.

It localises to the cytoplasm. The enzyme catalyses a fatty acyl-[ACP] + phosphate = an acyl phosphate + holo-[ACP]. Its pathway is lipid metabolism; phospholipid metabolism. Functionally, catalyzes the reversible formation of acyl-phosphate (acyl-PO(4)) from acyl-[acyl-carrier-protein] (acyl-ACP). This enzyme utilizes acyl-ACP as fatty acyl donor, but not acyl-CoA. The sequence is that of Phosphate acyltransferase from Shewanella pealeana (strain ATCC 700345 / ANG-SQ1).